A 577-amino-acid chain; its full sequence is Aspartate--tRNA ligase (577 aa).

L-aspartate is bound at residue glutamate 171. An aspartate region spans residues glutamine 195–lysine 198. Arginine 217 contacts L-aspartate. Residues arginine 217–glutamate 219 and glutamine 226 each bind ATP. Histidine 437 is a binding site for L-aspartate. Residue glutamate 472 coordinates ATP. Arginine 479 is an L-aspartate binding site. Glycine 524–arginine 527 lines the ATP pocket.

The protein belongs to the class-II aminoacyl-tRNA synthetase family. Type 1 subfamily. Homodimer.

It localises to the cytoplasm. The catalysed reaction is tRNA(Asp) + L-aspartate + ATP = L-aspartyl-tRNA(Asp) + AMP + diphosphate. In terms of biological role, catalyzes the attachment of L-aspartate to tRNA(Asp) in a two-step reaction: L-aspartate is first activated by ATP to form Asp-AMP and then transferred to the acceptor end of tRNA(Asp). In Deinococcus geothermalis (strain DSM 11300 / CIP 105573 / AG-3a), this protein is Aspartate--tRNA ligase.